Reading from the N-terminus, the 132-residue chain is Small ribosomal subunit protein uS12 (132 aa).

The residue at position 89 (aspartate 89) is a 3-methylthioaspartic acid. A disordered region spans residues 101-132 (TLDASGAAGPSSTNKATRNRKRSKYGVKRPKA). The segment covering 117–132 (TRNRKRSKYGVKRPKA) has biased composition (basic residues).

It belongs to the universal ribosomal protein uS12 family. As to quaternary structure, part of the 30S ribosomal subunit. Contacts proteins S8 and S17. May interact with IF1 in the 30S initiation complex.

In terms of biological role, with S4 and S5 plays an important role in translational accuracy. Its function is as follows. Interacts with and stabilizes bases of the 16S rRNA that are involved in tRNA selection in the A site and with the mRNA backbone. Located at the interface of the 30S and 50S subunits, it traverses the body of the 30S subunit contacting proteins on the other side and probably holding the rRNA structure together. The combined cluster of proteins S8, S12 and S17 appears to hold together the shoulder and platform of the 30S subunit. This Sorangium cellulosum (strain So ce56) (Polyangium cellulosum (strain So ce56)) protein is Small ribosomal subunit protein uS12.